A 461-amino-acid chain; its full sequence is MAAPWLQRWRGAYAGPSGPLRLVRLHGVQRSSWRAAHAAAGAFGAGPHPGPPQRAANPGPGPHPPPVATSREKHARIVQGRPDQPAEPKVLRISIIGAPNSGKSTLSNQLLGRKVFPVSKKVHTTRCKARGVITHEDTQLIILDTPGLTSPMKAKRHKLEAAMLTDPWDSMKHADLVLVLVDVSDHWTRNSLSLEVLKCLSQFPHIPSVLVLNKVDLLKKKIILLGLINELTEGIVNGKKLKVRSEFEYNSSSPAKTVLKVTQTPPPENRARESPCQLETDKAQEGSSLDNSSDVKASESSLDTEAREQKPYKYGDQKNRKGWPHFQDIFMLAALNGEEVDTLKQYLLMQAKPGPWEFHSRVLTSQSPHEICDNIIREKILEYLPLEVPYGVTQVTELWEEGPSGELIIVQNLVVPRKSHKLMLIGRRGALISRIAQEAGQDLMNIFLCDIRLKLKVEVKS.

A mitochondrion-targeting transit peptide spans 1–35 (MAAPWLQRWRGAYAGPSGPLRLVRLHGVQRSSWRA). A disordered region spans residues 39-73 (AAGAFGAGPHPGPPQRAANPGPGPHPPPVATSREK). Residues 89-354 (KVLRISIIGA…QYLLMQAKPG (266 aa)) enclose the Era-type G domain. The segment at 97–104 (GAPNSGKS) is G1. GTP is bound at residue 97 to 104 (GAPNSGKS). Residues 123–127 (HTTRC) form a G2 region. The G3 stretch occupies residues 144–147 (DTPG). GTP contacts are provided by residues 144–148 (DTPGL) and 213–216 (NKVD). Residues 213–216 (NKVD) are G4. Residues 260-319 (KVTQTPPPENRARESPCQLETDKAQEGSSLDNSSDVKASESSLDTEAREQKPYKYGDQKN) are disordered. Residues 269–284 (NRARESPCQLETDKAQ) are compositionally biased toward basic and acidic residues. The segment covering 285–303 (EGSSLDNSSDVKASESSLD) has biased composition (polar residues). Residues 304–319 (TEAREQKPYKYGDQKN) show a composition bias toward basic and acidic residues. A G5 region spans residues 332 to 334 (LAA). The region spanning 380–461 (ILEYLPLEVP…RLKLKVEVKS (82 aa)) is the KH type-2 domain.

This sequence belongs to the TRAFAC class TrmE-Era-EngA-EngB-Septin-like GTPase superfamily. Era GTPase family.

It is found in the mitochondrion matrix. Its subcellular location is the mitochondrion inner membrane. Functionally, probable GTPase that plays a role in the mitochondrial ribosomal small subunit assembly. Specifically binds the 12S mitochondrial rRNA (12S mt-rRNA) to a 33 nucleotide section delineating the 3' terminal stem-loop region. May act as a chaperone that protects the 12S mt-rRNA on the 28S mitoribosomal subunit during ribosomal small subunit assembly. In Gallus gallus (Chicken), this protein is GTPase Era, mitochondrial (ERAL1).